Consider the following 145-residue polypeptide: D-aminoacyl-tRNA deacylase (145 aa).

Residues 137–138 carry the Gly-cisPro motif, important for rejection of L-amino acids motif; that stretch reads GP.

It belongs to the DTD family. As to quaternary structure, homodimer.

The protein localises to the cytoplasm. The enzyme catalyses glycyl-tRNA(Ala) + H2O = tRNA(Ala) + glycine + H(+). It catalyses the reaction a D-aminoacyl-tRNA + H2O = a tRNA + a D-alpha-amino acid + H(+). Functionally, an aminoacyl-tRNA editing enzyme that deacylates mischarged D-aminoacyl-tRNAs. Also deacylates mischarged glycyl-tRNA(Ala), protecting cells against glycine mischarging by AlaRS. Acts via tRNA-based rather than protein-based catalysis; rejects L-amino acids rather than detecting D-amino acids in the active site. By recycling D-aminoacyl-tRNA to D-amino acids and free tRNA molecules, this enzyme counteracts the toxicity associated with the formation of D-aminoacyl-tRNA entities in vivo and helps enforce protein L-homochirality. The polypeptide is D-aminoacyl-tRNA deacylase (Rhodococcus opacus (strain B4)).